A 708-amino-acid chain; its full sequence is Vertnin (708 aa).

Disordered stretches follow at residues 473–499 and 561–636; these read PWKG…FLPP and APAL…PVAE. Over residues 568 to 582 the composition is skewed to basic and acidic residues; it reads GLREAKEKQEKEAGR.

It belongs to the vertnin family.

The sequence is that of Vertnin (VRTN) from Ailuropoda melanoleuca (Giant panda).